We begin with the raw amino-acid sequence, 609 residues long: Membrane protein insertase YidC (609 aa).

5 helical membrane passes run 8-28 (LILA…LFPP), 381-401 (MGWS…PLAL), 451-471 (LPIL…FVTI), 509-529 (SLTA…SMWL), and 545-565 (IFAW…SGLV).

It belongs to the OXA1/ALB3/YidC family. Type 1 subfamily. As to quaternary structure, interacts with the Sec translocase complex via SecD. Specifically interacts with transmembrane segments of nascent integral membrane proteins during membrane integration.

It is found in the cell inner membrane. Functionally, required for the insertion and/or proper folding and/or complex formation of integral membrane proteins into the membrane. Involved in integration of membrane proteins that insert both dependently and independently of the Sec translocase complex, as well as at least some lipoproteins. Aids folding of multispanning membrane proteins. This Ruegeria pomeroyi (strain ATCC 700808 / DSM 15171 / DSS-3) (Silicibacter pomeroyi) protein is Membrane protein insertase YidC.